The primary structure comprises 596 residues: Aspartate--tRNA(Asp/Asn) ligase (596 aa).

Glu-175 is an L-aspartate binding site. Residues 199–202 form an aspartate region; that stretch reads QQYK. L-aspartate-binding residues include Arg-221 and His-454. 221-223 serves as a coordination point for ATP; sequence RDE. Glu-488 serves as a coordination point for ATP. Position 495 (Arg-495) interacts with L-aspartate. 540–543 is a binding site for ATP; it reads GIDR.

The protein belongs to the class-II aminoacyl-tRNA synthetase family. Type 1 subfamily. As to quaternary structure, homodimer.

The protein localises to the cytoplasm. It carries out the reaction tRNA(Asx) + L-aspartate + ATP = L-aspartyl-tRNA(Asx) + AMP + diphosphate. Functionally, aspartyl-tRNA synthetase with relaxed tRNA specificity since it is able to aspartylate not only its cognate tRNA(Asp) but also tRNA(Asn). Reaction proceeds in two steps: L-aspartate is first activated by ATP to form Asp-AMP and then transferred to the acceptor end of tRNA(Asp/Asn). The chain is Aspartate--tRNA(Asp/Asn) ligase from Rhizobium leguminosarum bv. trifolii (strain WSM2304).